The primary structure comprises 431 residues: Helix-loop-helix protein 11 (431 aa).

Positions 88–109 (LANRSLSQPAPLSPTSLDPDRR) are disordered. Positions 91-103 (RSLSQPAPLSPTS) are enriched in polar residues. A bHLH domain is found at 112 to 163 (MRRQIANCNERRRMQSINAGFLALRALLPRKEGEKLSKAAILQQTADMVHQL). Composition is skewed to polar residues over residues 226–241 (TTTS…PRSN) and 248–257 (LPSSYASSAL). The interval 226–311 (TTTSSQASSP…PPPTLPSLET (86 aa)) is disordered. Residues 274-291 (TTSTPLSLLTLNGSPTSS) show a composition bias toward low complexity.

In terms of tissue distribution, expressed in the pharynx, nerve cords, the H-shaped excretory cell, vulva muscles, and the anal depressor (at protein level). Expressed in the intestine (at protein level). In males, it is also expressed in the spicules and hyp7 cells of the hypodermis (at protein level).

It localises to the nucleus. Its function is as follows. Transcriptional regulator. Component of a feedback loop involving atfs-1, atgl-1 and hlh-11. Binds to the promoter of the atgl-1 lipase to negatively regulate the expression of atgl-1, and thereby promoting fat oxidation in response to mitochondrial stress and mitochondrial respiration in the intestine. In addition, functions with atfs-1 to maintain lifespan. May have a role in fertility and in positively regulating body size. This is Helix-loop-helix protein 11 from Caenorhabditis elegans.